Reading from the N-terminus, the 364-residue chain is Developmentally-regulated GTP-binding protein 2 (364 aa).

Lys21 is subject to (3S)-3-hydroxylysine. The region spanning 63–288 (ARVALIGFPS…LLEMLWEYLA (226 aa)) is the OBG-type G domain. GTP is bound by residues 69 to 76 (GFPSVGKS), 94 to 98 (FTTLT), 115 to 118 (DLPG), 246 to 249 (NKID), and 269 to 271 (SCG). Ser76 and Thr96 together coordinate Mg(2+). In terms of domain architecture, TGS spans 288-363 (ALTCIYTKKR…EHEDVIQIVK (76 aa)).

Belongs to the TRAFAC class OBG-HflX-like GTPase superfamily. OBG GTPase family. As to quaternary structure, interacts with RWDD1; this interaction confers protection to polyubiquitination and proteolytic degradation. Interacts with JMJD7; this interaction is direct. Requires Mg(2+) as cofactor. Polyubiquitinated. In terms of processing, hydroxylated (with S stereochemistry) at C-3 of Lys-21 by JMJD7. Fairly high levels in liver, heart, kidney, and brain. Very low levels in lung, spleen, testis and skeletal muscle.

It localises to the nucleus. The protein resides in the cytoplasm. It catalyses the reaction GTP + H2O = GDP + phosphate + H(+). In terms of biological role, catalyzes the conversion of GTP to GDP through hydrolysis of the gamma-phosphate bond in GTP. When hydroxylated at C-3 of 'Lys-21' by JMJD7, may bind to RNA and play a role in translation. The chain is Developmentally-regulated GTP-binding protein 2 (Drg2) from Mus musculus (Mouse).